The sequence spans 61 residues: Ferredoxin (61 aa).

The 4Fe-4S ferredoxin-type domain maps to 2 to 28 (LYITEECTYCGACEPECPTNAISAGSE). The [4Fe-4S] cluster site is built by Cys-8, Cys-11, Cys-14, Cys-18, Cys-37, Cys-40, Cys-49, and Cys-53.

[4Fe-4S] cluster serves as cofactor.

In terms of biological role, ferredoxins are iron-sulfur proteins that transfer electrons in a wide variety of metabolic reactions. This is Ferredoxin from Chlorobaculum thiosulfatiphilum (Chlorobium limicola f.sp. thiosulfatophilum).